The following is a 100-amino-acid chain: Aspartyl/glutamyl-tRNA(Asn/Gln) amidotransferase subunit C (100 aa).

This sequence belongs to the GatC family. As to quaternary structure, heterotrimer of A, B and C subunits.

The catalysed reaction is L-glutamyl-tRNA(Gln) + L-glutamine + ATP + H2O = L-glutaminyl-tRNA(Gln) + L-glutamate + ADP + phosphate + H(+). It carries out the reaction L-aspartyl-tRNA(Asn) + L-glutamine + ATP + H2O = L-asparaginyl-tRNA(Asn) + L-glutamate + ADP + phosphate + 2 H(+). Functionally, allows the formation of correctly charged Asn-tRNA(Asn) or Gln-tRNA(Gln) through the transamidation of misacylated Asp-tRNA(Asn) or Glu-tRNA(Gln) in organisms which lack either or both of asparaginyl-tRNA or glutaminyl-tRNA synthetases. The reaction takes place in the presence of glutamine and ATP through an activated phospho-Asp-tRNA(Asn) or phospho-Glu-tRNA(Gln). This Dictyoglomus thermophilum (strain ATCC 35947 / DSM 3960 / H-6-12) protein is Aspartyl/glutamyl-tRNA(Asn/Gln) amidotransferase subunit C.